Consider the following 313-residue polypeptide: uncharacterized protein (313 aa).

Transmembrane regions (helical) follow at residues 42-64 (LVVLFNGALLLLCMGTGYVLFLT) and 74-96 (VRAYGIFFLIFLLLFLLINTLYV).

Its subcellular location is the cell membrane. This is an uncharacterized protein from Treponema pallidum (strain Nichols).